Here is a 294-residue protein sequence, read N- to C-terminus: Transcriptional regulatory protein RXT3 (294 aa).

At Ser-2 the chain carries N-acetylserine.

It belongs to the RXT3 family. As to quaternary structure, component of the RPD3C(L) complex composed of at least ASH1, CTI6, DEP1, PHO23, RPD3, RXT2, RXT3, SAP30, SDS3, SIN3, UME1 and UME6.

It is found in the nucleus. In terms of biological role, component of the RPD3C(L) histone deacetylase complex (HDAC) responsible for the deacetylation of lysine residues on the N-terminal part of the core histones (H2A, H2B, H3 and H4). Histone deacetylation gives a tag for epigenetic repression and plays an important role in transcriptional regulation, cell cycle progression and developmental events. The polypeptide is Transcriptional regulatory protein RXT3 (RXT3) (Saccharomyces cerevisiae (strain ATCC 204508 / S288c) (Baker's yeast)).